The sequence spans 890 residues: uncharacterized protein (890 aa).

Residues 1–20 (MKILKSLVLLVLFMAMPAKA) form the signal peptide. A run of 6 helical transmembrane segments spans residues 518–538 (AALT…ALKL), 567–587 (TYFF…VVGA), 613–633 (LLFI…IITI), 651–671 (VIAF…IILM), 684–704 (ISTL…FLLI), and 775–795 (FLVL…SYGL). The segment at 860 to 890 (KARKPEGGEHTNKFLAERNDVPKKEEGERKE) is disordered. Basic and acidic residues predominate over residues 862–890 (RKPEGGEHTNKFLAERNDVPKKEEGERKE).

The protein belongs to the TrbL/VirB6 family.

It localises to the cell membrane. This is an uncharacterized protein from Rickettsia felis (strain ATCC VR-1525 / URRWXCal2) (Rickettsia azadi).